The following is a 349-amino-acid chain: Phenylalanine--tRNA ligase alpha subunit (349 aa).

Position 258 (Glu-258) interacts with Mg(2+).

It belongs to the class-II aminoacyl-tRNA synthetase family. Phe-tRNA synthetase alpha subunit type 1 subfamily. As to quaternary structure, tetramer of two alpha and two beta subunits. It depends on Mg(2+) as a cofactor.

The protein resides in the cytoplasm. It catalyses the reaction tRNA(Phe) + L-phenylalanine + ATP = L-phenylalanyl-tRNA(Phe) + AMP + diphosphate + H(+). This chain is Phenylalanine--tRNA ligase alpha subunit, found in Rickettsia akari (strain Hartford).